The following is a 238-amino-acid chain: MRINFKLILIILTSFYGIINCQSTCPYSKTVINGASATFYSAMDNGNCGFGKLTGPTGPGNYMIAALGTKLYQNGAQCGQCFKISNSKNASVTVMATDSCNDAGYCQRDNHFDLSPTAFSILGAQSQGVLDGLSYVKVPCRVSGNVKVMLKDGSNAYWTSFLVFNNAIDVKQVSIKLSGSSTYVPLTQTTYNYWPSSITAGSFQVRIESIGGEFIYVTIPSVVSSKIYDTGSQFSSSC.

Residues methionine 1 to cysteine 21 form the signal peptide. The Expansin-like EG45 domain maps to asparagine 45 to asparagine 145. Cystine bridges form between cysteine 48/cysteine 78 and cysteine 81/cysteine 140. Residue asparagine 89 is glycosylated (N-linked (GlcNAc...) asparagine).

It belongs to the expansin family. Expansin A subfamily.

Its subcellular location is the secreted. May serve to lubricate the movement of the cellulose microfibrils during cell growth and wall extension and/or may serve to maintain the fluid state of the slug cell wall. This Dictyostelium discoideum (Social amoeba) protein is Expansin-like protein 5 (expl5).